The chain runs to 417 residues: Phosphoglycerate kinase 2 (417 aa).

Serine 2 is modified (N-acetylserine). A phosphoserine mark is found at serine 2 and serine 4. Position 11 is an N6-acetyllysine (lysine 11). Positions 23, 24, 25, 26, 38, and 39 each coordinate (2R)-3-phosphoglycerate. Lysine 48 is modified (N6-acetyllysine). Residues serine 62, histidine 63, glycine 65, and arginine 66 each coordinate (2R)-3-phosphoglycerate. 3 positions are modified to N6-acetyllysine: lysine 75, lysine 86, and lysine 97. The (2R)-3-phosphoglycerate site is built by leucine 122 and arginine 123. An N6-acetyllysine mark is found at lysine 131 and lysine 146. (2R)-3-phosphoglycerate is bound by residues histidine 170 and arginine 171. At tyrosine 196 the chain carries Phosphotyrosine. An N6-acetyllysine modification is found at lysine 199. Glycine 214 is an ADP binding site. Glycine 214 contributes to the CDP binding site. Positions 215 and 216 each coordinate AMP. Alanine 215 serves as a coordination point for ATP. Alanine 215 lines the Mg(2+) pocket. Residues alanine 218 and aspartate 219 each contribute to the Mg(2+) site. Aspartate 219 is a binding site for CDP. Lysine 220 is a binding site for AMP. ATP is bound at residue lysine 220. Glycine 238 is a binding site for ADP. Glycine 238 contributes to the CDP binding site. AMP is bound at residue glycine 239. Residue glycine 239 coordinates ATP. 2 positions are modified to N6-acetyllysine: lysine 267 and lysine 291. Position 313 (glycine 313) interacts with AMP. Glycine 313 provides a ligand contact to ATP. CDP-binding residues include glycine 338 and phenylalanine 343. Phenylalanine 343 serves as a coordination point for ADP. An AMP-binding site is contributed by glutamate 344. ATP is bound by residues glutamate 344, aspartate 375, and threonine 376. Aspartate 375 contributes to the Mg(2+) binding site.

Belongs to the phosphoglycerate kinase family. Monomer. Mg(2+) is required as a cofactor.

The protein resides in the cytoplasm. The enzyme catalyses (2R)-3-phosphoglycerate + ATP = (2R)-3-phospho-glyceroyl phosphate + ADP. The protein operates within carbohydrate degradation; glycolysis; pyruvate from D-glyceraldehyde 3-phosphate: step 2/5. Essential for sperm motility and male fertility but is not required for the completion of spermatogenesis. The chain is Phosphoglycerate kinase 2 (PGK2) from Macaca fascicularis (Crab-eating macaque).